We begin with the raw amino-acid sequence, 336 residues long: Phytochrome A-associated F-box protein (336 aa).

The F-box domain occupies 3–55; that stretch reads ESVFSCIPEDVVFNIFFKLQDDPRNWARLACVCTKFSSIVRNVCCKTQCYSAI. Positions 197-201 match the Nuclear localization signal motif; sequence RKRRK.

In terms of assembly, probable component of an E3 ubiquitin ligase SCF complex. Interacts with SKP1A/ASK1 and SKP1B/ASK2.

It localises to the nucleus. It participates in protein modification; protein ubiquitination. Component of SCF(ASK-cullin-F-box) E3 ubiquitin ligase complexes, which may mediate the ubiquitination and subsequent proteasomal degradation of target proteins. Negative regulator of the phyA signaling pathway that shifts the responsiveness of the phyA signaling system associated with hypocotyl elongation from red to far-red wavelength. The polypeptide is Phytochrome A-associated F-box protein (EID1) (Arabidopsis thaliana (Mouse-ear cress)).